The chain runs to 77 residues: NAD(P)H-quinone oxidoreductase subunit L (77 aa).

Transmembrane regions (helical) follow at residues 12–32 (LVAY…ILFY) and 47–67 (LIVY…SPFL).

This sequence belongs to the complex I NdhL subunit family. As to quaternary structure, NDH-1 can be composed of about 15 different subunits; different subcomplexes with different compositions have been identified which probably have different functions.

It localises to the cellular thylakoid membrane. The enzyme catalyses a plastoquinone + NADH + (n+1) H(+)(in) = a plastoquinol + NAD(+) + n H(+)(out). It carries out the reaction a plastoquinone + NADPH + (n+1) H(+)(in) = a plastoquinol + NADP(+) + n H(+)(out). Functionally, NDH-1 shuttles electrons from an unknown electron donor, via FMN and iron-sulfur (Fe-S) centers, to quinones in the respiratory and/or the photosynthetic chain. The immediate electron acceptor for the enzyme in this species is believed to be plastoquinone. Couples the redox reaction to proton translocation, and thus conserves the redox energy in a proton gradient. Cyanobacterial NDH-1 also plays a role in inorganic carbon-concentration. The chain is NAD(P)H-quinone oxidoreductase subunit L from Prochlorococcus marinus subsp. pastoris (strain CCMP1986 / NIES-2087 / MED4).